Reading from the N-terminus, the 233-residue chain is H-2 class II histocompatibility antigen, A-R alpha chain (233 aa).

The alpha-1 stretch occupies residues 1-88 (EDDIEADHVG…KRSNFTPAAN (88 aa)). Residues 1 to 195 (EDDIEADHVG…IPAPMSELTE (195 aa)) lie on the Extracellular side of the membrane. Residues 89-182 (EAPQATVFPK…GLEEPVLKHW (94 aa)) are alpha-2. Residues 91 to 183 (PQATVFPKSP…LEEPVLKHWE (93 aa)) enclose the Ig-like C1-type domain. Cysteine 111 and cysteine 167 are joined by a disulfide. A glycan (N-linked (GlcNAc...) asparagine) is linked at asparagine 122. Residues 183–195 (EPEIPAPMSELTE) form a connecting peptide region. The helical transmembrane segment at 196 to 221 (TVVCALGLSVGLVGIVVGTIFIIQGL) threads the bilayer. The Cytoplasmic segment spans residues 222–233 (RSGGTSRHPGPL).

It belongs to the MHC class II family.

Its subcellular location is the membrane. The sequence is that of H-2 class II histocompatibility antigen, A-R alpha chain (H2-Aa) from Mus musculus (Mouse).